The sequence spans 726 residues: 1,4-alpha-glucan branching enzyme GlgB (726 aa).

Catalysis depends on aspartate 407, which acts as the Nucleophile. Residue glutamate 460 is the Proton donor of the active site.

The protein belongs to the glycosyl hydrolase 13 family. GlgB subfamily. As to quaternary structure, monomer.

The catalysed reaction is Transfers a segment of a (1-&gt;4)-alpha-D-glucan chain to a primary hydroxy group in a similar glucan chain.. Its pathway is glycan biosynthesis; glycogen biosynthesis. In terms of biological role, catalyzes the formation of the alpha-1,6-glucosidic linkages in glycogen by scission of a 1,4-alpha-linked oligosaccharide from growing alpha-1,4-glucan chains and the subsequent attachment of the oligosaccharide to the alpha-1,6 position. The polypeptide is 1,4-alpha-glucan branching enzyme GlgB (Hydrogenovibrio crunogenus (strain DSM 25203 / XCL-2) (Thiomicrospira crunogena)).